The sequence spans 701 residues: Sulfate anion transporter 1 (701 aa).

The segment at 1 to 20 is disordered; that stretch reads MDESPEPLQQGRGPVPVRRQ. 2 helical membrane-spanning segments follow: residues 68 to 90 and 94 to 116; these read YLAG…AIAY and AGLQ…FLMG. N-linked (GlcNAc...) asparagine glycans are attached at residues asparagine 158 and asparagine 163. The next 7 helical transmembrane spans lie at 176–198, 255–277, 290–309, 342–364, 377–399, 412–434, and 472–494; these read YAIR…MGVL, GAGQ…LLAA, VPLP…SHFG, ALDA…EMFA, LLAV…SAAL, TQLS…APLF, and LVWA…LAGV. One can recognise an STAS domain in the interval 527 to 687; it reads EFEGLVPEPG…LSVHDAVQTA (161 aa).

This sequence belongs to the SLC26A/SulP transporter (TC 2.A.53) family. In terms of tissue distribution, expressed most abundantly in the kidney and liver, with lower levels in the pancreas, testis, brain, small intestine, colon, and lung.

The protein resides in the cell membrane. It localises to the basolateral cell membrane. The catalysed reaction is thiosulfate(in) + sulfate(out) = thiosulfate(out) + sulfate(in). It catalyses the reaction 2 hydrogencarbonate(out) + sulfate(in) = 2 hydrogencarbonate(in) + sulfate(out). The enzyme catalyses oxalate(in) + sulfate(out) = oxalate(out) + sulfate(in). It carries out the reaction oxalate(in) + 2 hydrogencarbonate(out) = oxalate(out) + 2 hydrogencarbonate(in). Its function is as follows. Sodium-independent sulfate anion transporter. Can transport other anions including bicarbonate, thiosulfate and oxalate by mediating sulfate-thiosulfate, sulfate-hydrogencarbonate and sulfate-oxalate anion exchange. Mediates oxalate-hydrogencarbonate anion exchange. This chain is Sulfate anion transporter 1 (SLC26A1), found in Homo sapiens (Human).